A 321-amino-acid polypeptide reads, in one-letter code: MAAATRGCRPWGSLLGLLGLVSAAAAAWDLASLRCTLGAFCECDFRPDLPGLECDLAQHLAGQHLAKALVVKALKAFVRDPAPTKPLVLSLHGWTGTGKSYVSSLLAHYLFQGGLRSPRVHHFSPVLHFPHPSHIERYKKDLKSWVQGNLTACGRSLFLFDEMDKMPPGLMEVLRPFLGSSWVVYGTNYRKAIFIFISNTGGKQINQVALEAWRSRRDREEILLQELEPVISRAVLDNPHHGFSNSGIMEERLLDAVVPFLPLQRHHVRHCVLNELAQLGLEPRDEVVQAVLDSTTFFPEDEQLFSSNGCKTVASRIAFFL.

The first 26 residues, 1 to 26 (MAAATRGCRPWGSLLGLLGLVSAAAA), serve as a signal peptide directing secretion. 93–100 (GWTGTGKS) contributes to the ATP binding site. N-linked (GlcNAc...) asparagine glycosylation occurs at asparagine 149.

Belongs to the ClpA/ClpB family. Torsin subfamily. In terms of assembly, homohexamer. Interacts with TOR1AIP1. Isoform 1 is expressed ubiquitously, except in cardiac and endothelial tissues.

It localises to the endoplasmic reticulum lumen. This chain is Torsin-2A (TOR2A), found in Homo sapiens (Human).